The chain runs to 56 residues: Protein translocase subunit SecE (56 aa).

The helical transmembrane segment at V30 to L50 threads the bilayer.

This sequence belongs to the SecE/SEC61-gamma family. In terms of assembly, component of the Sec protein translocase complex. Heterotrimer consisting of SecY, SecE and SecG subunits. The heterotrimers can form oligomers, although 1 heterotrimer is thought to be able to translocate proteins. Interacts with the ribosome. Interacts with SecDF, and other proteins may be involved. Interacts with SecA.

It is found in the cell inner membrane. Its function is as follows. Essential subunit of the Sec protein translocation channel SecYEG. Clamps together the 2 halves of SecY. May contact the channel plug during translocation. The polypeptide is Protein translocase subunit SecE (Borreliella burgdorferi (strain ATCC 35210 / DSM 4680 / CIP 102532 / B31) (Borrelia burgdorferi)).